The following is a 102-amino-acid chain: MAMAMGMAMRKEAAVAVMMVMVVTLAAGADAGAGAACEPAQLAVCASAILGGTKPSGECCGNLRAQQGCLCQYVKDPNYGHYVSSPHARDTLNLCGIPVPHC.

An N-terminal signal peptide occupies residues 1–35 (MAMAMGMAMRKEAAVAVMMVMVVTLAAGADAGAGA). Cystine bridges form between Cys37/Cys71, Cys45/Cys59, Cys60/Cys95, and Cys69/Cys102.

It belongs to the plant LTP family. B11E subfamily. Aleurone.

Its function is as follows. Potential phospholipid transfer protein. In Hordeum vulgare (Barley), this protein is Probable non-specific lipid-transfer protein (LTP2).